We begin with the raw amino-acid sequence, 258 residues long: Type II restriction enzyme HindII (258 aa).

The enzyme catalyses Endonucleolytic cleavage of DNA to give specific double-stranded fragments with terminal 5'-phosphates.. A P subtype restriction enzyme that recognizes the double-stranded sequence 5'-GTYRAC-3' and cleaves after Y-3. This is Type II restriction enzyme HindII (hindIIR) from Haemophilus influenzae (strain ATCC 51907 / DSM 11121 / KW20 / Rd).